The sequence spans 147 residues: Small ribosomal subunit protein uS5 (147 aa).

The region spanning 9–72 is the S5 DRBM domain; it reads FEEVVVNISR…DNAFKNITTV (64 aa).

It belongs to the universal ribosomal protein uS5 family. Part of the 30S ribosomal subunit. Contacts proteins S4 and S8.

Functionally, with S4 and S12 plays an important role in translational accuracy. Its function is as follows. Located at the back of the 30S subunit body where it stabilizes the conformation of the head with respect to the body. The protein is Small ribosomal subunit protein uS5 of Nitratiruptor sp. (strain SB155-2).